Here is a 335-residue protein sequence, read N- to C-terminus: Endo-1,4-beta-xylanase S20 (335 aa).

Residues 1 to 22 form the signal peptide; sequence MLRKLVTGALAAALLLSGQSNA. In terms of domain architecture, GH11 spans 39–241; it reads NNKNETGNGN…GSGYVDFTYA (203 aa). Residues N42 and N78 are each glycosylated (N-linked (GlcNAc...) asparagine). E134 acts as the Nucleophile in catalysis. N-linked (GlcNAc...) asparagine glycosylation is present at N202. The Proton donor role is filled by E228. N-linked (GlcNAc...) asparagine glycosylation is present at N251. The interval 251-291 is disordered; it reads NASAPSNNNNNNNNNNDNNGNWNNWNNNNNNNNNNNNNNNN. Residues 257 to 291 show a composition bias toward low complexity; it reads NNNNNNNNNNDNNGNWNNWNNNNNNNNNNNNNNNN. The CBM1 domain occupies 300 to 335; sequence NCAAIWGQCGGSGYNGPKCCKQGSCKQINQWYSQCQ.

This sequence belongs to the glycosyl hydrolase 11 (cellulase G) family.

The protein resides in the secreted. It catalyses the reaction Endohydrolysis of (1-&gt;4)-beta-D-xylosidic linkages in xylans.. It participates in glycan degradation; xylan degradation. Functionally, endo-1,4-beta-xylanase involved in the hydrolysis of xylan, a major structural heterogeneous polysaccharide found in plant biomass representing the second most abundant polysaccharide in the biosphere, after cellulose. The chain is Endo-1,4-beta-xylanase S20 (xynS20) from Neocallimastix patriciarum (Rumen fungus).